A 583-amino-acid polypeptide reads, in one-letter code: Probable cysteine--tRNA ligase, mitochondrial (583 aa).

C82 provides a ligand contact to Zn(2+). G83 is a binding site for L-cysteine. A 'HIGH' region motif is present at residues 84 to 94; that stretch reads PTVYSSSHIGH. Position 123 (T123) interacts with L-cysteine. The short motif at 128–131 is the 'KIIK' region element; it reads KIIN. Zn(2+) contacts are provided by C271, H296, and E300. Residue H296 participates in L-cysteine binding. Residues 337-341 carry the 'KMSKS' region motif; that stretch reads KMSKS. ATP is bound at residue K340.

The protein belongs to the class-I aminoacyl-tRNA synthetase family. Zn(2+) serves as cofactor.

It is found in the mitochondrion. It carries out the reaction tRNA(Cys) + L-cysteine + ATP = L-cysteinyl-tRNA(Cys) + AMP + diphosphate. Functionally, mitochondrial cysteine-specific aminoacyl-tRNA synthetase that catalyzes the ATP-dependent ligation of cysteine to tRNA(Cys). In terms of biological role, in addition to its role as an aminoacyl-tRNA synthetase, has also cysteine persulfide synthase activity. Produces reactive persulfide species such as cysteine persulfide (CysSSH) from substrate cysteine and mediate direct incorporation of CysSSH into proteins during translations, resulting in protein persulfides and polysulfides. CysSSHs behave as potent antioxidants and cellular protectants. The polypeptide is Probable cysteine--tRNA ligase, mitochondrial (mcysS) (Dictyostelium discoideum (Social amoeba)).